Reading from the N-terminus, the 678-residue chain is UvrABC system protein C (678 aa).

Residues 16 to 95 enclose the GIY-YIG domain; the sequence is VEPGVYRFRD…IKEFDPRFNI (80 aa). A UVR domain is found at 208–243; it reads DRLIREMEQQMTAAAEDLDFERAARLRDNIGAMRRA. A compositionally biased stretch (low complexity) spans 649–667; the sequence is EAPPEPGAEAPPDSGAAAA. The disordered stretch occupies residues 649–678; the sequence is EAPPEPGAEAPPDSGAAAAVMGNDQSRVPG.

This sequence belongs to the UvrC family. Interacts with UvrB in an incision complex.

The protein resides in the cytoplasm. In terms of biological role, the UvrABC repair system catalyzes the recognition and processing of DNA lesions. UvrC both incises the 5' and 3' sides of the lesion. The N-terminal half is responsible for the 3' incision and the C-terminal half is responsible for the 5' incision. In Mycolicibacterium gilvum (strain PYR-GCK) (Mycobacterium gilvum (strain PYR-GCK)), this protein is UvrABC system protein C.